The following is a 353-amino-acid chain: Melanin-concentrating hormone receptor 1 (353 aa).

A disordered region spans residues 1-31 (MDLEASLLPTGPNTSNTSDGPDNLTSAGSPP). The Extracellular portion of the chain corresponds to 1–45 (MDLEASLLPTGPNTSNTSDGPDNLTSAGSPPRSGSVSYINIIMPS). Residues 11–31 (GPNTSNTSDGPDNLTSAGSPP) show a composition bias toward polar residues. Residues Asn-13, Asn-16, and Asn-23 are each glycosylated (N-linked (GlcNAc...) asparagine). A helical transmembrane segment spans residues 46-66 (VFGTICLLGIIGNSMVIFAVV). The Cytoplasmic segment spans residues 67–79 (KKSKLHWCNNVPD). Residues 80 to 100 (IFIINLSVVDLLFLLGMPFMI) traverse the membrane as a helical segment. Residues 101 to 118 (HQLMGNGVWHFGETMCTL) are Extracellular-facing. Cys-116 and Cys-194 form a disulfide bridge. A helical membrane pass occupies residues 119–139 (ITAMDANSQFTSTYILTAMAI). At 140 to 161 (DRYLATVHPISSTKFRKPSVAT) the chain is on the cytoplasmic side. The helical transmembrane segment at 162 to 182 (LVICLLWALSFISITPVWLYA) threads the bilayer. At 183-204 (RLIPFPGGAVGCGIRLPNPDTD) the chain is on the extracellular side. The chain crosses the membrane as a helical span at residues 205–225 (LYWFTLYQFFLAFALPFVVIT). The Cytoplasmic portion of the chain corresponds to 226–257 (AAYVRILQRMTSSVAPASQRSIRLRTKRVTRT). A helical membrane pass occupies residues 258–278 (AIAICLVFFVCWAPYYVLQLT). Over 279–294 (QLSISRPTLTFVYLYN) the chain is Extracellular. The chain crosses the membrane as a helical span at residues 295–315 (AAISLGYANSCLNPFVYIVLC). Residues 316–353 (ETFRKRLVLSVKPAAQGQLRAVSNAQTADEERTESKGT) are Cytoplasmic-facing.

The protein belongs to the G-protein coupled receptor 1 family. As to quaternary structure, interacts with NCDN.

It localises to the cell membrane. Receptor for melanin-concentrating hormone, coupled to both G proteins that inhibit adenylyl cyclase and G proteins that activate phosphoinositide hydrolysis. The protein is Melanin-concentrating hormone receptor 1 of Macaca mulatta (Rhesus macaque).